We begin with the raw amino-acid sequence, 172 residues long: Large ribosomal subunit protein bL9 (172 aa).

This sequence belongs to the bacterial ribosomal protein bL9 family.

Functionally, binds to the 23S rRNA. This chain is Large ribosomal subunit protein bL9, found in Chlamydia caviae (strain ATCC VR-813 / DSM 19441 / 03DC25 / GPIC) (Chlamydophila caviae).